The primary structure comprises 123 residues: Ribosome-binding factor A (123 aa).

This sequence belongs to the RbfA family. Monomer. Binds 30S ribosomal subunits, but not 50S ribosomal subunits or 70S ribosomes.

It is found in the cytoplasm. Functionally, one of several proteins that assist in the late maturation steps of the functional core of the 30S ribosomal subunit. Associates with free 30S ribosomal subunits (but not with 30S subunits that are part of 70S ribosomes or polysomes). Required for efficient processing of 16S rRNA. May interact with the 5'-terminal helix region of 16S rRNA. The polypeptide is Ribosome-binding factor A (Neisseria meningitidis serogroup B (strain ATCC BAA-335 / MC58)).